The following is a 491-amino-acid chain: MTTWDKCLKKIKKNLSTFEYKTWIKPIHVEQNSNLFTVYCNNEYFKKHIKSKYGNLILSTIQECHGNDLIIEYSNKKFSGEKITEVITAGPQANFFSTTSVEIKDESEDTKVVQEPKISNKSNSKDFSSSQELFGFDEAMLITAKEDEEYSFGLPLKEKYVFDSFVVGDANKIARAAAMQVSINPGKLHNPLFIYGGSGLGKTHLMQAIGNHAREVNPNAKIIYTNSEQFIKDYVNSIRLQDQDEFQRVYRSADILLIDDIQFIAGKEGTAQEFFHTFNALYENGKQIILTSDKYPNEIEGLEERLVSRFGYGLTVSVDMPDLETRIAILLKKAHDLGQKLPNETAAFIAENVRTNVRELEGALNRVLTTSKFNHKDPTIEVAQACLRDVIKIQEKKVKIDNIQKVVADFYRIRVKDLTSNQRSRNIARPRQIAMSLARELTSHSLPEIGNAFGGRDHTTVMHAVKAITKLRQSNTSISDDYELLLDKISR.

Residues 1–69 (MTTWDKCLKK…TIQECHGNDL (69 aa)) form a domain I, interacts with DnaA modulators region. Residues 69 to 154 (LIIEYSNKKF…KEDEEYSFGL (86 aa)) form a domain II region. The interval 155–371 (PLKEKYVFDS…GALNRVLTTS (217 aa)) is domain III, AAA+ region. 4 residues coordinate ATP: G199, G201, K202, and T203. The interval 372-491 (KFNHKDPTIE…YELLLDKISR (120 aa)) is domain IV, binds dsDNA.

Belongs to the DnaA family. Oligomerizes as a right-handed, spiral filament on DNA at oriC.

Its subcellular location is the cytoplasm. In terms of biological role, plays an essential role in the initiation and regulation of chromosomal replication. ATP-DnaA binds to the origin of replication (oriC) to initiate formation of the DNA replication initiation complex once per cell cycle. Binds the DnaA box (a 9 base pair repeat at the origin) and separates the double-stranded (ds)DNA. Forms a right-handed helical filament on oriC DNA; dsDNA binds to the exterior of the filament while single-stranded (ss)DNA is stabiized in the filament's interior. The ATP-DnaA-oriC complex binds and stabilizes one strand of the AT-rich DNA unwinding element (DUE), permitting loading of DNA polymerase. After initiation quickly degrades to an ADP-DnaA complex that is not apt for DNA replication. Binds acidic phospholipids. The polypeptide is Chromosomal replication initiator protein DnaA (Francisella tularensis subsp. holarctica (strain OSU18)).